The sequence spans 460 residues: tRNA modification GTPase MnmE (460 aa).

(6S)-5-formyl-5,6,7,8-tetrahydrofolate-binding residues include Arg22, Glu87, and Arg126. Residues Gly222–Phe381 form the TrmE-type G domain. Position 232 (Asn232) interacts with K(+). GTP-binding positions include Asn232–Ser237, Thr251–Thr257, and Asp276–Gly279. Ser236 lines the Mg(2+) pocket. Positions 251, 253, and 256 each coordinate K(+). Position 257 (Thr257) interacts with Mg(2+). Residue Lys460 participates in (6S)-5-formyl-5,6,7,8-tetrahydrofolate binding.

This sequence belongs to the TRAFAC class TrmE-Era-EngA-EngB-Septin-like GTPase superfamily. TrmE GTPase family. Homodimer. Heterotetramer of two MnmE and two MnmG subunits. K(+) is required as a cofactor.

The protein localises to the cytoplasm. Its function is as follows. Exhibits a very high intrinsic GTPase hydrolysis rate. Involved in the addition of a carboxymethylaminomethyl (cmnm) group at the wobble position (U34) of certain tRNAs, forming tRNA-cmnm(5)s(2)U34. The sequence is that of tRNA modification GTPase MnmE from Thermoanaerobacter pseudethanolicus (strain ATCC 33223 / 39E) (Clostridium thermohydrosulfuricum).